A 204-amino-acid chain; its full sequence is Thiamine-phosphate synthase (204 aa).

4-amino-2-methyl-5-(diphosphooxymethyl)pyrimidine contacts are provided by residues 28–32 (QLRIK) and asparagine 60. Mg(2+)-binding residues include aspartate 61 and aspartate 80. 4-amino-2-methyl-5-(diphosphooxymethyl)pyrimidine contacts are provided by serine 99 and lysine 128. Residues glycine 157 and 177–178 (VT) each bind 2-[(2R,5Z)-2-carboxy-4-methylthiazol-5(2H)-ylidene]ethyl phosphate.

This sequence belongs to the thiamine-phosphate synthase family. It depends on Mg(2+) as a cofactor.

The catalysed reaction is 2-[(2R,5Z)-2-carboxy-4-methylthiazol-5(2H)-ylidene]ethyl phosphate + 4-amino-2-methyl-5-(diphosphooxymethyl)pyrimidine + 2 H(+) = thiamine phosphate + CO2 + diphosphate. It catalyses the reaction 2-(2-carboxy-4-methylthiazol-5-yl)ethyl phosphate + 4-amino-2-methyl-5-(diphosphooxymethyl)pyrimidine + 2 H(+) = thiamine phosphate + CO2 + diphosphate. It carries out the reaction 4-methyl-5-(2-phosphooxyethyl)-thiazole + 4-amino-2-methyl-5-(diphosphooxymethyl)pyrimidine + H(+) = thiamine phosphate + diphosphate. Its pathway is cofactor biosynthesis; thiamine diphosphate biosynthesis; thiamine phosphate from 4-amino-2-methyl-5-diphosphomethylpyrimidine and 4-methyl-5-(2-phosphoethyl)-thiazole: step 1/1. Its function is as follows. Condenses 4-methyl-5-(beta-hydroxyethyl)thiazole monophosphate (THZ-P) and 2-methyl-4-amino-5-hydroxymethyl pyrimidine pyrophosphate (HMP-PP) to form thiamine monophosphate (TMP). The chain is Thiamine-phosphate synthase from Rhizobium etli (strain ATCC 51251 / DSM 11541 / JCM 21823 / NBRC 15573 / CFN 42).